Consider the following 595-residue polypeptide: uncharacterized protein (595 aa).

A disordered region spans residues 1 to 21 (MSSQLKSTWAPVPSTKPSQPC). WD repeat units lie at residues 56 to 95 (EHTA…KILK), 100 to 143 (AISG…GEIF), 144 to 184 (GHSS…FNRS), 187 to 226 (VHSK…QVYE), 229 to 268 (AHKG…LIRE), 313 to 352 (GHQR…AFPL), 356 to 393 (SHTN…FAKD), 433 to 472 (KTIY…LCEV), 477 to 516 (DSTA…VITS), 520 to 559 (FHTG…KYIA), and 564 to 594 (HSLG…WSVT).

Belongs to the WD repeat AIP1 family.

This is an uncharacterized protein from Schizosaccharomyces pombe (strain 972 / ATCC 24843) (Fission yeast).